The primary structure comprises 88 residues: Small ribosomal subunit protein bS20 (88 aa).

Positions 1-27 are disordered; sequence MANSKSAKKRALQSEKRRQHNASRRSM.

This sequence belongs to the bacterial ribosomal protein bS20 family.

Its function is as follows. Binds directly to 16S ribosomal RNA. The protein is Small ribosomal subunit protein bS20 of Shewanella baltica (strain OS223).